Consider the following 147-residue polypeptide: Large ribosomal subunit protein uL15 (147 aa).

Positions 1-62 (MDLNTLKPAL…GQMPLQRRLP (62 aa)) are disordered. Residues 30–39 (TATKGHKGQK) are compositionally biased toward basic residues.

The protein belongs to the universal ribosomal protein uL15 family. In terms of assembly, part of the 50S ribosomal subunit.

In terms of biological role, binds to the 23S rRNA. The protein is Large ribosomal subunit protein uL15 of Pelobacter propionicus (strain DSM 2379 / NBRC 103807 / OttBd1).